The chain runs to 504 residues: Maturase K (504 aa).

This sequence belongs to the intron maturase 2 family. MatK subfamily.

It localises to the plastid. Its subcellular location is the chloroplast. In terms of biological role, usually encoded in the trnK tRNA gene intron. Probably assists in splicing its own and other chloroplast group II introns. This Kokia drynarioides (Hawaiian tree cotton) protein is Maturase K.